We begin with the raw amino-acid sequence, 430 residues long: POU domain, class 2, transcription factor 3 (430 aa).

Disordered stretches follow at residues 1-40 (MVNLEPMHTEIKMSGDVADSTDARSTFGQVESGNDRNGLD), 60-81 (HRPCHLSQGPTMMPGNQMSGDM), 129-180 (LLLP…EPTD), and 248-267 (DAESSPSDPSASTPSSYPTL). Polar residues-rich tracts occupy residues 23–32 (ARSTFGQVES) and 67–78 (QGPTMMPGNQMS). Low complexity predominate over residues 129-139 (LLLPQTGPGLT). The POU-specific domain occupies 176-250 (DEPTDLEELE…LLEKWLNDAE (75 aa)). Low complexity predominate over residues 251 to 267 (SSPSDPSASTPSSYPTL). Positions 274–333 (KRKKRTSIETNIRLTLEKRFQDNPKPSSEEISMIAEQLSMEKEVVRVWFCNRRQKEKRIN) form a DNA-binding region, homeobox. Composition is skewed to low complexity over residues 355–364 (SLGSLSVPPV) and 374–390 (SSCSPGNNSRPSSPGSG). The segment at 355–413 (SLGSLSVPPVHSTMPGTVTSSCSPGNNSRPSSPGSGLHASSPTASQNNSKAAMNPSSAA) is disordered. The span at 392-413 (HASSPTASQNNSKAAMNPSSAA) shows a compositional bias: polar residues.

Belongs to the POU transcription factor family. Class-2 subfamily. As to quaternary structure, interacts (via the POU domain) with POU2AF1 and POU2AF2 in a DNA-dependent manner; this interaction recruits POU2AF2 to chromatin and increases POU2F3 transactivation activity. As to expression, expressed in epidermis and hair follicles.

The protein resides in the nucleus. Its function is as follows. Transcription factor that binds to the octamer motif (5'-ATTTGCAT-3') and regulates cell type-specific differentiation pathways. Involved in the regulation of keratinocytes differentiation. The POU2F3-POU2AF2/POU2AF3 complex drives the expression of tuft-cell-specific genes, a rare chemosensory cells that coordinate immune and neural functions within mucosal epithelial tissues. In terms of biological role, inhibits transactivation by POU2F1. This Rattus norvegicus (Rat) protein is POU domain, class 2, transcription factor 3 (Pou2f3).